We begin with the raw amino-acid sequence, 61 residues long: Probable tautomerase BH3814 (61 aa).

The active-site Proton acceptor; via imino nitrogen is the proline 2.

The protein belongs to the 4-oxalocrotonate tautomerase family.

The sequence is that of Probable tautomerase BH3814 from Halalkalibacterium halodurans (strain ATCC BAA-125 / DSM 18197 / FERM 7344 / JCM 9153 / C-125) (Bacillus halodurans).